The chain runs to 1250 residues: MRIIFLRKEYLSLLPSMIASLFSANGVAAVTDSCQGYDVKASCQASRQSLSGITQDWSIADGQWLVFSDMTNNASGGAVFLQQGAEFSLLPENETGMTLFANNTVTGEYNNGGAIFAKENSTLNLTDVIFSGNVAGGYGGAIYSSGTNDTGAVDLRVTNAMFRNNIANDGKGGAIYTINNDVYLSDVIFDNNQAYTSTSYSDGDGGAIDVTDNNSDSKHPSGYTIVNNTAFTNNTAEGYGGAIYTNSVTAPYLIDISVDDSYSQNGGVLVDENNSAAGYGDGPSSAAGGFMYLGLSEVTFDIADGKTLVIGNTENDGAVDSIAGTGLITKTGSGDLVLNADNNDFTGEMQIENGEVTLGRSNSLMNVGDTHCQDDPQDCYGLTIGSIDQYQNQAELNVGSTQQTFVHALTGFQNGTLNIDAGGNVTVNQGSFAGIIEGAGQLTIAQNGSYVLAGAQSMALTGDIVVDDGAVLSLEGDAADLTALQDDPQSIVLNGGVLDLSDFSTWQSGTSYNDGLEVSGSSGTVIGSQDVVDLAGGDNLHIGGDGKDGVYVVVDASDGQVSLANNNSYLGTTQIASGTLMVSDNSQLGDTHYNRQVIFTDKQQESVMEITSDVDTRSDAAGHGRDIEMRADGEVAVDAGVDTQWGALMADSSGQHQDEGSTLTKTGAGTLELTASGTTQSAVRVEEGTLKGDVADILPYASSLWVGDGATFVTGADQDIQSIDAISSGTIDISDGTVLRLTGQDTSVALNASLFNGDGTLVNATDGVTLTGELNTNLETDSLTYLSNVTVNGNLTNTSGAVSLQNGVAGDTLTVNGDYTGGGTLLLDSELNGDDSVSDQLVMNGNTAGNTTVVVNSITGIGEPTSTGIKVVDFAADPTQFQNNAQFSLAGSGYVNMGAYDYTLVEDNNDWYLRSQEVTPPSPPDPDPTPDPDPTPDPDPTPDPEPTPAYQPVLNAKVGGYLNNLRAANQAFMMERRDHAGGDGQTLNLRVIGGDYHYTAAGQLAQHEDTSTVQLSGDLFSGRWGTDGEWMLGIVGGYSDNQGDSRSNMTGTRADNQNHGYAVGLTSSWFQHGNQKQGAWLDSWLQYAWFSNDVSEQEDGTDHYHSSGIIASLEAGYQWLPGRGVVIEPQAQVIYQGVQQDDFTAANRARVSQSQGDDIQTRLGLHSEWRTAVHVIPTLDLNYYHDPHSTEIEEDGSTISDDAVKQRGEIKVGVTGNISQRVSLRGSVAWQKGSDDFAQTAGFLSMTVKW.

The signal sequence occupies residues 1–28 (MRIIFLRKEYLSLLPSMIASLFSANGVA). The interval 914 to 951 (RSQEVTPPSPPDPDPTPDPDPTPDPDPTPDPEPTPAYQ) is disordered. Repeat 1 spans residues 919–920 (TP). The tract at residues 919 to 948 (TPPSPPDPDPTPDPDPTPDPDPTPDPEPTP) is 15 X 2 AA approximate tandem repeats of [DTPE]-P. A 2; approximate repeat occupies 921-922 (PS). Copy 3 of the repeat occupies 923–924 (PP). Residues 925-926 (DP) form a 4; approximate repeat. 11 consecutive repeat copies span residues 927-928 (DP), 929-930 (TP), 931-932 (DP), 933-934 (DP), 935-936 (TP), 937-938 (DP), 939-940 (DP), 941-942 (TP), 943-944 (DP), 945-946 (EP), and 947-948 (TP). Positions 928 to 942 (PTPDPDPTPDPDPTP) are enriched in acidic residues. Residues 980 to 1250 (AGGDGQTLNL…AGFLSMTVKW (271 aa)) form the Autotransporter domain.

An approximately 170 kDa protein is detected in the outer membrane, while a C-terminal 55 kDa fragment is detected in whole cells. The full-length putative autotransporter may be cleaved to release the mature protein from the outer membrane; Pefabloc SC, a Ser-Thr protease inhibitor prevents the appearance of the 55 kDa C--terminal fragment.

The protein localises to the periplasm. The protein resides in the secreted. Its subcellular location is the cell surface. It is found in the cell outer membrane. Probably an autotransporter. Upon overexpression shows increased adherence to polyvinyl chloride (PVC) plates, increased mature biofilm formation. The protein is Probable autotransporter YfaL (yfaL) of Escherichia coli (strain K12).